A 169-amino-acid polypeptide reads, in one-letter code: Putative antitoxin Rv0268c (169 aa).

Residues 1–11 (MGTRSKSRTRQ) are compositionally biased toward basic residues. A disordered region spans residues 1–35 (MGTRSKSRTRQLKQSNGCTATTSGASDRRRRARRR). Positions 120–153 (AAILISAERYESLMEELEDLRDRLSVHEREHVTM) form a coiled coil.

The protein belongs to the phD/YefM antitoxin family.

Putative antitoxin component of a type II toxin-antitoxin (TA) system; however the expected toxin coding sequence is not found adjacent to this gene. The polypeptide is Putative antitoxin Rv0268c (Mycobacterium tuberculosis (strain ATCC 25618 / H37Rv)).